The following is a 264-amino-acid chain: Acyl-[acyl-carrier-protein]--UDP-N-acetylglucosamine O-acyltransferase (264 aa).

This sequence belongs to the transferase hexapeptide repeat family. LpxA subfamily. As to quaternary structure, homotrimer.

It localises to the cytoplasm. It carries out the reaction a (3R)-hydroxyacyl-[ACP] + UDP-N-acetyl-alpha-D-glucosamine = a UDP-3-O-[(3R)-3-hydroxyacyl]-N-acetyl-alpha-D-glucosamine + holo-[ACP]. The protein operates within glycolipid biosynthesis; lipid IV(A) biosynthesis; lipid IV(A) from (3R)-3-hydroxytetradecanoyl-[acyl-carrier-protein] and UDP-N-acetyl-alpha-D-glucosamine: step 1/6. Its function is as follows. Involved in the biosynthesis of lipid A, a phosphorylated glycolipid that anchors the lipopolysaccharide to the outer membrane of the cell. This is Acyl-[acyl-carrier-protein]--UDP-N-acetylglucosamine O-acyltransferase from Glaesserella parasuis serovar 5 (strain SH0165) (Haemophilus parasuis).